The following is a 264-amino-acid chain: Major prion protein (264 aa).

A signal peptide spans 1 to 24 (MVKSHIGSWILVLFVAMWSDVGLC). Positions 25–241 (KKRPKPGGGW…ESQAYYQRGA (217 aa)) are interaction with GRB2, ERI3 and SYN1. Positions 28–118 (PKPGGGWNTG…QWNKPSKPKT (91 aa)) are disordered. Over residues 37–54 (GGSRYPGPGSPGGNRYPP) the composition is skewed to low complexity. 6 tandem repeats follow at residues 54 to 62 (PQGGGGWGQ), 63 to 70 (PHGGGWGQ), 71 to 78 (PHGGGWGQ), 79 to 86 (PHGGGWGQ), 87 to 94 (PHGGGWGQ), and 95 to 103 (PHGGGGWGQ). Positions 54-103 (PQGGGGWGQPHGGGWGQPHGGGWGQPHGGGWGQPHGGGWGQPHGGGGWGQ) are 6 X 8 AA tandem repeats of P-H-G-G-G-W-G-Q. A compositionally biased stretch (gly residues) spans 55-107 (QGGGGWGQPHGGGWGQPHGGGWGQPHGGGWGQPHGGGWGQPHGGGGWGQGGTH). The Cu(2+) site is built by His-72, Gly-73, Gly-74, His-80, Gly-81, Gly-82, His-88, Gly-89, Gly-90, His-96, and Gly-98. Cys-190 and Cys-225 form a disulfide bridge. N-linked (GlcNAc...) asparagine glycans are attached at residues Asn-192 and Asn-208. Ala-241 carries GPI-anchor amidated alanine lipidation. The propeptide at 242–264 (SVILFSSPPVILLISFLIFLIVG) is removed in mature form.

The protein belongs to the prion family. Monomer and homodimer. Has a tendency to aggregate into amyloid fibrils containing a cross-beta spine, formed by a steric zipper of superposed beta-strands. Soluble oligomers may represent an intermediate stage on the path to fibril formation. Copper binding may promote oligomerization. Interacts with GRB2, APP, ERI3/PRNPIP and SYN1. Mislocalized cytosolically exposed PrP interacts with MGRN1; this interaction alters MGRN1 subcellular location and causes lysosomal enlargement. Interacts with KIAA1191.

The protein localises to the cell membrane. The protein resides in the golgi apparatus. Its primary physiological function is unclear. Has cytoprotective activity against internal or environmental stresses. May play a role in neuronal development and synaptic plasticity. May be required for neuronal myelin sheath maintenance. May play a role in iron uptake and iron homeostasis. Soluble oligomers are toxic to cultured neuroblastoma cells and induce apoptosis (in vitro). Association with GPC1 (via its heparan sulfate chains) targets PRNP to lipid rafts. Also provides Cu(2+) or Zn(2+) for the ascorbate-mediated GPC1 deaminase degradation of its heparan sulfate side chains. This Ailuropoda melanoleuca (Giant panda) protein is Major prion protein (PRNP).